The following is a 1066-amino-acid chain: Elongation factor 3 (1066 aa).

6 HEAT repeats span residues F112–P149, A151–E188, A192–N229, D231–S268, A269–N306, and P312–D353. T418 is an ADP binding site. ABC transporter domains lie at E454–L672 and I699–E1015. ADP contacts are provided by N735, E944, N947, and H973. The tract at residues G997–L1066 is disordered. Residues R1042–A1054 are compositionally biased toward basic residues.

The protein belongs to the ABC transporter superfamily. ABCF family. EF3 subfamily.

Its subcellular location is the cytoplasm. The protein resides in the cytosol. It catalyses the reaction ATP + H2O = ADP + phosphate + H(+). It functions in the pathway protein biosynthesis; polypeptide chain elongation. Its function is as follows. Ribosome-dependent ATPase that functions in cytoplasmic translation elongation. Required for the ATP-dependent release of deacylated tRNA from the ribosomal E-site during protein biosynthesis. Stimulates the eEF1A-dependent binding of aminoacyl-tRNA to the ribosomal A-site, which has reduced affinity for tRNA as long as the E-site is occupied. Assists translation termination by stimulating the release of nascent protein from the ribosome by release factors. The chain is Elongation factor 3 from Mycosarcoma maydis (Corn smut fungus).